Here is a 126-residue protein sequence, read N- to C-terminus: Fluoride-specific ion channel FluC (126 aa).

4 helical membrane passes run 4 to 24 (LLLVCLGGALGSGARYLTSAW), 36 to 56 (GTLLVNVSGSFLLAGIMTASL), 67 to 85 (LFLAAGVMGGFTTYSSFNY), and 101 to 121 (AYLLATVLGCLAAAFAATLLV). Na(+) contacts are provided by G75 and T78.

It belongs to the fluoride channel Fluc/FEX (TC 1.A.43) family.

The protein localises to the cell inner membrane. It carries out the reaction fluoride(in) = fluoride(out). Its activity is regulated as follows. Na(+) is not transported, but it plays an essential structural role and its presence is essential for fluoride channel function. Its function is as follows. Fluoride-specific ion channel. Important for reducing fluoride concentration in the cell, thus reducing its toxicity. The protein is Fluoride-specific ion channel FluC of Anaeromyxobacter dehalogenans (strain 2CP-1 / ATCC BAA-258).